Reading from the N-terminus, the 195-residue chain is Cysteine/O-acetylserine efflux protein (195 aa).

A run of 5 helical transmembrane segments spans residues 47–67 (SLGF…LAVI), 70–90 (AAVH…AWKI), 105–125 (ISFW…LYGV), 142–162 (VVGV…CWAL), and 177–194 (QLNI…VRIF).

The protein belongs to the Rht family.

It localises to the cell inner membrane. It catalyses the reaction O-acetyl-L-serine(in) = O-acetyl-L-serine(out). The catalysed reaction is L-cysteine(in) = L-cysteine(out). Functionally, exporter of O-acetylserine (OAS) and cysteine. This Shigella boydii serotype 4 (strain Sb227) protein is Cysteine/O-acetylserine efflux protein (eamB).